A 456-amino-acid chain; its full sequence is tRNA-2-methylthio-N(6)-dimethylallyladenosine synthase (456 aa).

Positions 13 to 129 (RYLYVRTFGC…IASLLEEVER (117 aa)) constitute an MTTase N-terminal domain. [4Fe-4S] cluster contacts are provided by C22, C58, C92, C168, C172, and C175. The 231-residue stretch at 154–384 (GTGDVVAQVT…QSIQADITLQ (231 aa)) folds into the Radical SAM core domain. One can recognise a TRAM domain in the interval 387-450 (LAETGTVREV…SHSLKGELLS (64 aa)).

It belongs to the methylthiotransferase family. MiaB subfamily. Monomer. It depends on [4Fe-4S] cluster as a cofactor.

It localises to the cytoplasm. The enzyme catalyses N(6)-dimethylallyladenosine(37) in tRNA + (sulfur carrier)-SH + AH2 + 2 S-adenosyl-L-methionine = 2-methylsulfanyl-N(6)-dimethylallyladenosine(37) in tRNA + (sulfur carrier)-H + 5'-deoxyadenosine + L-methionine + A + S-adenosyl-L-homocysteine + 2 H(+). Catalyzes the methylthiolation of N6-(dimethylallyl)adenosine (i(6)A), leading to the formation of 2-methylthio-N6-(dimethylallyl)adenosine (ms(2)i(6)A) at position 37 in tRNAs that read codons beginning with uridine. The protein is tRNA-2-methylthio-N(6)-dimethylallyladenosine synthase of Syntrophobacter fumaroxidans (strain DSM 10017 / MPOB).